The chain runs to 69 residues: MKRIWVSLMIAITACSAHAKRVTCKHFATQAEAQAYMEKYKAYHLDGDHDGEACECLLGGSSHGLARCR.

A signal peptide spans methionine 1–alanine 19.

This is an uncharacterized protein from Pasteurella multocida (strain Pm70).